Consider the following 512-residue polypeptide: Photosystem II CP47 reaction center protein (512 aa).

The next 6 helical transmembrane spans lie at 21 to 36 (AVHL…WAGS), 101 to 115 (IVLS…IWHW), 140 to 156 (GIHL…FGAF), 203 to 218 (IAAG…FHLS), 237 to 252 (VLSS…AFVV), and 457 to 472 (TFAL…HGAR).

It belongs to the PsbB/PsbC family. PsbB subfamily. In terms of assembly, PSII is composed of 1 copy each of membrane proteins PsbA, PsbB, PsbC, PsbD, PsbE, PsbF, PsbH, PsbI, PsbJ, PsbK, PsbL, PsbM, PsbT, PsbX, PsbY, PsbZ, Psb30/Ycf12, at least 3 peripheral proteins of the oxygen-evolving complex and a large number of cofactors. It forms dimeric complexes. Binds multiple chlorophylls. PSII binds additional chlorophylls, carotenoids and specific lipids. serves as cofactor.

Its subcellular location is the plastid. It is found in the chloroplast thylakoid membrane. One of the components of the core complex of photosystem II (PSII). It binds chlorophyll and helps catalyze the primary light-induced photochemical processes of PSII. PSII is a light-driven water:plastoquinone oxidoreductase, using light energy to abstract electrons from H(2)O, generating O(2) and a proton gradient subsequently used for ATP formation. In Physcomitrium patens (Spreading-leaved earth moss), this protein is Photosystem II CP47 reaction center protein.